A 425-amino-acid chain; its full sequence is Glutamate-1-semialdehyde 2,1-aminomutase (425 aa).

Lys-265 carries the post-translational modification N6-(pyridoxal phosphate)lysine.

The protein belongs to the class-III pyridoxal-phosphate-dependent aminotransferase family. HemL subfamily. As to quaternary structure, homodimer. The cofactor is pyridoxal 5'-phosphate.

The protein localises to the cytoplasm. It carries out the reaction (S)-4-amino-5-oxopentanoate = 5-aminolevulinate. It participates in porphyrin-containing compound metabolism; protoporphyrin-IX biosynthesis; 5-aminolevulinate from L-glutamyl-tRNA(Glu): step 2/2. The protein is Glutamate-1-semialdehyde 2,1-aminomutase of Chromobacterium violaceum (strain ATCC 12472 / DSM 30191 / JCM 1249 / CCUG 213 / NBRC 12614 / NCIMB 9131 / NCTC 9757 / MK).